Here is a 278-residue protein sequence, read N- to C-terminus: Putative ABC transporter ATP-binding protein MTBMA_c05830 (278 aa).

The ABC transporter domain maps to 4 to 239 (IEAVNIRYTY…IDTIRGADLR (236 aa)). Residue 37 to 44 (GPNGAGKS) participates in ATP binding.

Belongs to the ABC transporter superfamily.

It localises to the cell membrane. In terms of biological role, probably part of an ABC transporter complex. Responsible for energy coupling to the transport system. In Methanothermobacter marburgensis (strain ATCC BAA-927 / DSM 2133 / JCM 14651 / NBRC 100331 / OCM 82 / Marburg) (Methanobacterium thermoautotrophicum), this protein is Putative ABC transporter ATP-binding protein MTBMA_c05830.